A 465-amino-acid polypeptide reads, in one-letter code: Chromosomal replication initiator protein DnaA (465 aa).

Residues 1–87 (MLWTDCLTRL…RPGSILSSSE (87 aa)) form a domain I, interacts with DnaA modulators region. The interval 81-123 (SILSSSEQPATTTAALQTAPIPQPAKVKREPEPVANTAVSSKS) is disordered. Low complexity predominate over residues 88-100 (QPATTTAALQTAP). The segment at 88–127 (QPATTTAALQTAPIPQPAKVKREPEPVANTAVSSKSSKKK) is domain II. A domain III, AAA+ region region spans residues 128–345 (LLNPQFTFSL…GALNKVVAIS (218 aa)). ATP is bound by residues Gly173, Gly175, Lys176, and Thr177. The domain IV, binds dsDNA stretch occupies residues 346 to 465 (RFKGAPIDLD…YKNLLRLLQS (120 aa)).

The protein belongs to the DnaA family. In terms of assembly, oligomerizes as a right-handed, spiral filament on DNA at oriC.

The protein localises to the cytoplasm. Its function is as follows. Plays an essential role in the initiation and regulation of chromosomal replication. ATP-DnaA binds to the origin of replication (oriC) to initiate formation of the DNA replication initiation complex once per cell cycle. Binds the DnaA box (a 9 base pair repeat at the origin) and separates the double-stranded (ds)DNA. Forms a right-handed helical filament on oriC DNA; dsDNA binds to the exterior of the filament while single-stranded (ss)DNA is stabiized in the filament's interior. The ATP-DnaA-oriC complex binds and stabilizes one strand of the AT-rich DNA unwinding element (DUE), permitting loading of DNA polymerase. After initiation quickly degrades to an ADP-DnaA complex that is not apt for DNA replication. Binds acidic phospholipids. In Acinetobacter baumannii (strain ATCC 17978 / DSM 105126 / CIP 53.77 / LMG 1025 / NCDC KC755 / 5377), this protein is Chromosomal replication initiator protein DnaA.